Here is a 367-residue protein sequence, read N- to C-terminus: Germination protease (367 aa).

The propeptide occupies 1–15 (MKEPLDLSKYSVRTD).

Belongs to the peptidase A25 family. As to quaternary structure, homotetramer. In terms of processing, autoproteolytically processed. The inactive tetrameric zymogen termed p46 autoprocesses to a smaller form termed p41, which is active only during spore germination.

The catalysed reaction is Endopeptidase action with P4 Glu or Asp, P1 preferably Glu &gt; Asp, P1' hydrophobic and P2' Ala.. Its function is as follows. Initiates the rapid degradation of small, acid-soluble proteins during spore germination. This chain is Germination protease, found in Bacillus cereus (strain G9842).